A 158-amino-acid chain; its full sequence is Glycine/sarcosine/betaine reductase complex component A (158 aa).

Sec-44 is an active-site residue. A non-standard amino acid (selenocysteine) is located at residue Sec-44.

The protein belongs to the GrdA family. Monomer. Component of the glycine, sarcosine and betaine reductase complexes, together with components B and C.

The catalysed reaction is acetyl phosphate + [thioredoxin]-disulfide + NH4(+) + H2O = [thioredoxin]-dithiol + glycine + phosphate + H(+). The enzyme catalyses acetyl phosphate + methylamine + [thioredoxin]-disulfide + H2O = sarcosine + [thioredoxin]-dithiol + phosphate + H(+). It carries out the reaction acetyl phosphate + trimethylamine + [thioredoxin]-disulfide + H2O = glycine betaine + [thioredoxin]-dithiol + phosphate + H(+). In the first step of glycine, betaine and sarcosine reductases, the substrate is bound to component PB via a Schiff base intermediate. Then the PB-activated substrate is nucleophilically attacked by the selenol anion of component PA to transform it to a carboxymethylated selenoether and the respective amine. By action of component PC, acetyl phosphate is formed, leaving component PA in its oxidized state. Finally component PA becomes reduced by the thioredoxin system to start a new catalytic cycle of reductive deamination. In Alkaliphilus metalliredigens (strain QYMF), this protein is Glycine/sarcosine/betaine reductase complex component A.